Reading from the N-terminus, the 351-residue chain is SLAM family member 6 (351 aa).

Positions M1–S30 are cleaved as a signal peptide. Topologically, residues E31–N239 are extracellular. The region spanning S36–S130 is the Ig-like V-type domain. N-linked (GlcNAc...) asparagine glycans are attached at residues N82, N101, N112, N152, N159, N172, N186, N193, and N218. Residues N147–C210 form the Ig-like C2-type domain. Cystine bridges form between C162–C229 and C168–C210. A helical transmembrane segment spans residues A240–I262. Residues H263–S351 lie on the Cytoplasmic side of the membrane. The segment at P272 to Y295 is disordered. 2 consecutive short sequence motifs (ITSM) follow at residues T293 to V298 and T317 to V322. Y319 carries the post-translational modification Phosphotyrosine.

In terms of assembly, homodimer. Interacts with PTN6 and, upon phosphorylation, with PTN11 and SH2D1A/SAP. Phosphorylated. Expressed on hematopoietic cells. Isoform 3 is expressed in thymocytes and B lymphocytes of C57Bl/6 strain.

It localises to the cell membrane. Self-ligand receptor of the signaling lymphocytic activation molecule (SLAM) family. SLAM receptors triggered by homo- or heterotypic cell-cell interactions are modulating the activation and differentiation of a wide variety of immune cells and thus are involved in the regulation and interconnection of both innate and adaptive immune response. Activities are controlled by presence or absence of small cytoplasmic adapter proteins, SH2D1A/SAP and/or SH2D1B/EAT-2. Triggers cytolytic activity only in natural killer cells (NK) expressing high surface densities of natural cytotoxicity receptors. Positive signaling in NK cells implicates phosphorylation of VAV1. NK cell activation seems to depend on SH2D1B and not on SH2D1A. In conjunction with SLAMF1 controls the transition between positive selection and the subsequent expansion and differentiation of the thymocytic natural killer T (NKT) cell lineage. Promotes T cell differentiation into a helper T-cell Th17 phenotype leading to increased IL-17 secretion; the costimulatory activity requires SH2D1A. Promotes recruitment of RORC to the IL-17 promoter. In conjunction with SLAMF1 and CD84/SLAMF5 may be a negative regulator of the humoral immune response. In the absence of SH2D1A/SAP can transmit negative signals to CD4(+) T-cells and NKT cells. Negatively regulates germinal center formation by inhibiting T-cell:B-cell adhesion; the function probably implicates increased association with PTPN6/SHP-1 via ITSMs in absence of SH2D1A/SAP. However, reported to mediated T-cell adhesion, to participate in stable T-cell:B-cell interactions and to be involved in maintaining B-cell tolerance in germinal centers and in preventing autoimmunity. Involved in regulation of autoimmunity. Isoform 3 may be suppressor of pathogenic T-cell proliferation. This Mus musculus (Mouse) protein is SLAM family member 6 (Slamf6).